A 358-amino-acid polypeptide reads, in one-letter code: tRNA-specific 2-thiouridylase MnmA (358 aa).

Residues 6–13 (AMSGGVDS) and Leu32 contribute to the ATP site. Residue Cys101 is the Nucleophile of the active site. A disulfide bond links Cys101 and Cys193. Position 125 (Gly125) interacts with ATP. The interval 143 to 145 (KDQ) is interaction with tRNA. The active-site Cysteine persulfide intermediate is the Cys193.

Belongs to the MnmA/TRMU family.

It is found in the cytoplasm. The enzyme catalyses S-sulfanyl-L-cysteinyl-[protein] + uridine(34) in tRNA + AH2 + ATP = 2-thiouridine(34) in tRNA + L-cysteinyl-[protein] + A + AMP + diphosphate + H(+). Functionally, catalyzes the 2-thiolation of uridine at the wobble position (U34) of tRNA, leading to the formation of s(2)U34. This Mycobacterium leprae (strain Br4923) protein is tRNA-specific 2-thiouridylase MnmA.